The primary structure comprises 192 residues: Putative inactive ribonuclease 11 (192 aa).

The signal sequence occupies residues 1 to 15 (MAVFLLLLALGLLLA). Residues 21–54 (RMKGTTEQFSQEEMQPAAKQTLEESANSTLSDKN) form a disordered region. The span at 43–54 (EESANSTLSDKN) shows a compositional bias: polar residues. N-linked (GlcNAc...) asparagine glycosylation is found at Asn-47 and Asn-104.

It belongs to the pancreatic ribonuclease family.

The protein localises to the secreted. The sequence is that of Putative inactive ribonuclease 11 (Rnase11) from Mus musculus (Mouse).